We begin with the raw amino-acid sequence, 274 residues long: uncharacterized protein (274 aa).

Residues 1–15 show a composition bias toward basic and acidic residues; the sequence is MEESKTKRKEDRIDL. The tract at residues 1–40 is disordered; sequence MEESKTKRKEDRIDLKNTPPQKKSKRDSTNDETARTSLRS. Positions 41–87 constitute a G-patch domain; that stretch reads IMPRGYKMMENMGYKEGETLGSNESALKEPIKVEINTKRRGIRAEKP.

The protein localises to the cytoplasm. The protein resides in the nucleus. This is an uncharacterized protein from Saccharomyces cerevisiae (strain ATCC 204508 / S288c) (Baker's yeast).